Here is a 262-residue protein sequence, read N- to C-terminus: Protein BcsX (262 aa).

Its pathway is glycan metabolism; bacterial cellulose biosynthesis. The protein is Protein BcsX (bcsX) of Komagataeibacter xylinus (Gluconacetobacter xylinus).